Reading from the N-terminus, the 927-residue chain is Nuclear factor of activated T-cells, cytoplasmic 2 (927 aa).

The interval 1–29 (MDVPEPQPDPDGGDGPGHEPGGSPQDELD) is disordered. A phosphoserine mark is found at Ser23, Ser53, Ser54, Ser56, Ser99, Ser107, and Ser110. Positions 111–116 (PRIEIT) are calcineurin-binding. Residues 119–201 (HELMQAGGAL…CVSPNNAGPD (83 aa)) form a transactivation domain A (TAD-A) region. 9 positions are modified to phosphoserine: Ser136, Ser150, Ser170, Ser173, Ser174, Ser176, Ser177, Ser179, and Ser182. The segment at 163–177 (YREPLCLSPASSGSS) is required for cytoplasmic retention of the phosphorylated form. A run of 2 repeats spans residues 186–202 (SPYT…GPDD) and 215–231 (SPRT…LAED). The tract at residues 186–292 (SPYTSPCVSP…PHVALQDDSI (107 aa)) is 3 X approximate SP repeats. 2 disordered regions span residues 203 to 299 (LCPQ…YPPT) and 322 to 341 (SKIW…PSKA). Ser215, Ser219, Ser223, Ser238, and Ser245 each carry phosphoserine. The segment covering 216–226 (PRTSPIMSPRT) has biased composition (polar residues). Positions 253–255 (KRR) match the Nuclear localization signal motif. Phosphoserine occurs at positions 257, 270, 276, 278, 282, 328, and 365. Over residues 267–277 (PAASPQRSRSP) the composition is skewed to low complexity. One copy of the 3; approximate repeat lies at 274–290 (SRSPSPQPSPHVALQDD). Positions 394 to 576 (ASLPPLEWPL…NPIECSQRSA (183 aa)) constitute an RHD domain. A DNA-binding region spans residues 423–430 (RAHYETEG). A phosphoserine mark is found at Ser757, Ser759, and Ser761. Disordered stretches follow at residues 790–812 (AGSQ…QQAS) and 841–903 (FGPS…QNLD). Residues 798–812 (GSTLPHTSSASQQAS) show a composition bias toward polar residues. Residue Ser860 is modified to Phosphoserine.

Member of the multicomponent NFATC transcription complex that consists of at least two components, a pre-existing cytoplasmic component NFATC2 and an inducible nuclear component NFATC1. Other members such as NFATC4, NFATC3 or members of the activating protein-1 family, MAF, GATA4 and Cbp/p300 can also bind the complex. The phosphorylated form specifically interacts with XPO1; which mediates nuclear export. NFATC proteins bind to DNA as monomers. Interacts with NFATC2IP. Interacts with FOXP3. Interacts with TBX21 ('Thr-302' phosphorylated form). Interacts with KAT2A. Interacts with HOMER2 and HOMER3; this interaction competes with calcineurin/PPP3CA-binding and hence prevents NFATC2 dephosphorylation and activation. Interacts with protein phosphatase PPP3CA/calcineurin A. Interacts with AKAP5 (via leucine zipper domain); this is required for NFATC2/NFAT1 recruitment to CRAC channels. In terms of processing, in resting cells, phosphorylated by NFATC-kinase on at least 18 sites in the 99-365 region. Upon cell stimulation, all these sites except Ser-245 are dephosphorylated by calcineurin. Dephosphorylation induces a conformational change that simultaneously exposes an NLS and masks an NES, which results in nuclear localization. Simultaneously, one site among Ser-53; Ser-54 and Ser-56 is phosphorylated; which is required for full transcriptional activity. Post-translationally, ubiquitinated in endothelial cells by RNF213 downstream of the non-canonical Wnt signaling pathway, leading to its degradation by the proteasome. As to expression, expressed in spleen, heart, testis, brain, placenta, muscle and pancreas. Expressed in the thymus. Expressed in the lung. Expressed in cartilage.

It localises to the cytoplasm. Its subcellular location is the nucleus. Its function is as follows. Plays a role in the inducible expression of cytokine genes in T cells, especially in the induction of the IL-2, IL-3, IL-4, TNF-alpha or GM-CSF. Promotes invasive migration through the activation of GPC6 expression and WNT5A signaling pathway. Is involved in the negative regulation of chondrogenesis. Recruited by AKAP5 to ORAI1 pore-forming subunit of CRAC channels in Ca(2+) signaling microdomains where store-operated Ca(2+) influx is coupled to calmodulin and calcineurin signaling and activation of NFAT-dependent transcriptional responses. This Mus musculus (Mouse) protein is Nuclear factor of activated T-cells, cytoplasmic 2 (Nfatc2).